The following is a 314-amino-acid chain: Putative S-adenosyl-L-methionine-dependent methyltransferase MAB_3886c (314 aa).

Residues aspartate 133 and 162–163 contribute to the S-adenosyl-L-methionine site; that span reads DL.

This sequence belongs to the UPF0677 family.

Exhibits S-adenosyl-L-methionine-dependent methyltransferase activity. In Mycobacteroides abscessus (strain ATCC 19977 / DSM 44196 / CCUG 20993 / CIP 104536 / JCM 13569 / NCTC 13031 / TMC 1543 / L948) (Mycobacterium abscessus), this protein is Putative S-adenosyl-L-methionine-dependent methyltransferase MAB_3886c.